Here is a 230-residue protein sequence, read N- to C-terminus: 5'-methylthioadenosine/S-adenosylhomocysteine nucleosidase (230 aa).

Glu-12 serves as the catalytic Proton acceptor. Substrate-binding positions include Gly-78, Ile-153, and 174 to 175 (ME). The Proton donor role is filled by Asp-198.

It belongs to the PNP/UDP phosphorylase family. MtnN subfamily.

The enzyme catalyses S-adenosyl-L-homocysteine + H2O = S-(5-deoxy-D-ribos-5-yl)-L-homocysteine + adenine. The catalysed reaction is S-methyl-5'-thioadenosine + H2O = 5-(methylsulfanyl)-D-ribose + adenine. It carries out the reaction 5'-deoxyadenosine + H2O = 5-deoxy-D-ribose + adenine. The protein operates within amino-acid biosynthesis; L-methionine biosynthesis via salvage pathway; S-methyl-5-thio-alpha-D-ribose 1-phosphate from S-methyl-5'-thioadenosine (hydrolase route): step 1/2. Functionally, catalyzes the irreversible cleavage of the glycosidic bond in both 5'-methylthioadenosine (MTA) and S-adenosylhomocysteine (SAH/AdoHcy) to adenine and the corresponding thioribose, 5'-methylthioribose and S-ribosylhomocysteine, respectively. Also cleaves 5'-deoxyadenosine, a toxic by-product of radical S-adenosylmethionine (SAM) enzymes, into 5-deoxyribose and adenine. This is 5'-methylthioadenosine/S-adenosylhomocysteine nucleosidase from Shewanella halifaxensis (strain HAW-EB4).